A 387-amino-acid chain; its full sequence is Protein FAM153B (387 aa).

Disordered stretches follow at residues 233–256 (SYNG…RGDL) and 327–374 (TITG…KKSR). The segment covering 336–345 (SASPSSAPAE) has biased composition (low complexity). Residues 347 to 359 (ATEKTKVEEEVKT) are compositionally biased toward basic and acidic residues. Residues 360–374 (RKPKKKTRKPSKKSR) are compositionally biased toward basic residues.

The protein belongs to the FAM153 family.

The sequence is that of Protein FAM153B (FAM153B) from Homo sapiens (Human).